Here is a 538-residue protein sequence, read N- to C-terminus: ATP synthase subunit alpha, mitochondrial (538 aa).

197 to 204 (GDRQTGKT) serves as a coordination point for ATP. Positions 228 to 248 (FCIYVAVGQKRSTVAQIVKRL) are essential and sufficient for enterobactin binding.

Belongs to the ATPase alpha/beta chains family. As to quaternary structure, subunit of the F-type ATPase which has 2 components, CF(1) - the catalytic core - and CF(0) - the membrane proton channel. As to expression, ubiquitous (at protein level).

The protein resides in the mitochondrion. Its subcellular location is the mitochondrion inner membrane. In terms of biological role, mitochondrial membrane ATP synthase (F(1)F(0) ATP synthase or Complex V) produces ATP from ADP in the presence of a proton gradient across the membrane which is generated by electron transport complexes of the respiratory chain. F-type ATPases consist of two structural domains, F(1) - containing the extramembraneous catalytic core, and F(0) - containing the membrane proton channel, linked together by a central stalk and a peripheral stalk. During catalysis, ATP synthesis in the catalytic domain of F(1) is coupled via a rotary mechanism of the central stalk subunits to proton translocation. Subunits alpha and beta form the catalytic core in F(1). Rotation of the central stalk against the surrounding subunits leads to hydrolysis of ATP in three separate catalytic sites on the beta subunits. Subunit alpha does not bear the catalytic high-affinity ATP-binding sites. Binds the bacterial siderophore enterobactin and is required for the assimilation of enterobactin-bound iron from non-pathogenic bacteria. Promotes mitochondrial accumulation of enterobactin-derived iron ions. The sequence is that of ATP synthase subunit alpha, mitochondrial from Caenorhabditis elegans.